The following is a 318-amino-acid chain: Serpentine receptor class delta-25 (318 aa).

A run of 7 helical transmembrane segments spans residues 5–25, 38–58, 88–108, 126–146, 176–196, 226–246, and 258–278; these read LLHSVLSLVGILSNAFMMYLA, VVITIKTGTDILASSMSFFVM, HMFMLCFLEYDLVWLITSYLF, IAFYVFIPSMVHMGVWISIYI, ITLLTQLFITACLAVVAYTFI, TFKLILPSFIFLGITVFVAMF, and IVSVCFMFSPVCSPYAYIIFV.

It belongs to the nematode receptor-like protein srd family.

The protein resides in the membrane. The polypeptide is Serpentine receptor class delta-25 (srd-25) (Caenorhabditis elegans).